The chain runs to 535 residues: Glucans biosynthesis protein D 1 (535 aa).

The segment at residues 1 to 28 is a signal peptide (tat-type signal); it reads MHRRDLLKQLAAGFLALAPGLTPSTASA. Positions 275–287 are insert; the sequence is RTDRAGDRQSAAR.

It belongs to the OpgD/OpgG family. In terms of processing, predicted to be exported by the Tat system. The position of the signal peptide cleavage has not been experimentally proven.

The protein localises to the periplasm. It participates in glycan metabolism; osmoregulated periplasmic glucan (OPG) biosynthesis. Functionally, probably involved in the control of the structural glucose backbone of osmoregulated periplasmic glucans (OPGs). The protein is Glucans biosynthesis protein D 1 (opgD1) of Ralstonia nicotianae (strain ATCC BAA-1114 / GMI1000) (Ralstonia solanacearum).